Consider the following 304-residue polypeptide: Signal recognition particle receptor FtsY (304 aa).

GTP is bound by residues 109–116 (GVNGVGKT), 191–195 (DTAGR), and 255–258 (TKLD).

This sequence belongs to the GTP-binding SRP family. FtsY subfamily. In terms of assembly, part of the signal recognition particle protein translocation system, which is composed of SRP and FtsY. In terms of processing, sensitive to endogenous proteolytic cleavage between residues 18 and 19 and between residues 86 and 87.

The protein localises to the cell membrane. Its subcellular location is the cytoplasm. The catalysed reaction is GTP + H2O = GDP + phosphate + H(+). Functionally, involved in targeting and insertion of nascent membrane proteins into the cytoplasmic membrane. Acts as a receptor for the complex formed by the signal recognition particle (SRP) and the ribosome-nascent chain (RNC). This is Signal recognition particle receptor FtsY from Thermus aquaticus.